The primary structure comprises 304 residues: Glycine--tRNA ligase alpha subunit (304 aa).

Belongs to the class-II aminoacyl-tRNA synthetase family. As to quaternary structure, tetramer of two alpha and two beta subunits.

The protein resides in the cytoplasm. It carries out the reaction tRNA(Gly) + glycine + ATP = glycyl-tRNA(Gly) + AMP + diphosphate. In Yersinia pseudotuberculosis serotype O:1b (strain IP 31758), this protein is Glycine--tRNA ligase alpha subunit.